We begin with the raw amino-acid sequence, 743 residues long: Neutral ceramidase (743 aa).

Residues 1–14 (MASKSRRLSGLEIS) lie on the Cytoplasmic side of the membrane. Residues 15-35 (LIVLFLLMTAVSVALITVLAL) form a helical; Signal-anchor for type II membrane protein membrane-spanning segment. Residues 36-743 (KQESDKKEEV…FKVARSFYYF (708 aa)) are Lumenal-facing. Positions 40 to 60 (DKKEEVTPEEPSPSVTPPEKP) are disordered. The span at 49-59 (EPSPSVTPPEK) shows a compositional bias: pro residues. Zn(2+)-binding residues include His-151 and His-260. An N-linked (GlcNAc...) asparagine glycan is attached at Asn-265. The Nucleophile role is filled by Ser-312. 2 disulfides stabilise this stretch: Cys-320–Cys-334 and Cys-327–Cys-342. N-linked (GlcNAc...) asparagine glycans are attached at residues Asn-331, Asn-389, Asn-398, and Asn-451. Cys-406 and Cys-456 are oxidised to a cystine. Zn(2+)-binding residues include Glu-498 and Tyr-538. The N-linked (GlcNAc...) asparagine glycan is linked to Asn-661. Ca(2+) contacts are provided by Asp-672, Ser-674, and Thr-677. Asn-720 is a glycosylation site (N-linked (GlcNAc...) asparagine).

The protein belongs to the neutral ceramidase family. Zn(2+) is required as a cofactor. In terms of processing, N-glycosylated. O-glycosylated. In terms of tissue distribution, detected in intestine (at protein level).

The protein localises to the cell membrane. Its subcellular location is the membrane raft. It is found in the membrane. The protein resides in the caveola. It localises to the golgi apparatus membrane. The protein localises to the mitochondrion. Its subcellular location is the secreted. It is found in the extracellular exosome. It carries out the reaction an N-acylsphing-4-enine + H2O = sphing-4-enine + a fatty acid. The enzyme catalyses N-dodecanoylsphing-4-enine + H2O = dodecanoate + sphing-4-enine. It participates in lipid metabolism; sphingolipid metabolism. Functionally, plasma membrane ceramidase that hydrolyzes sphingolipid ceramides into sphingosine and free fatty acids at neutral pH. Ceramides, sphingosine, and its phosphorylated form sphingosine-1-phosphate are bioactive lipids that mediate cellular signaling pathways regulating several biological processes including cell proliferation, apoptosis and differentiation. Also catalyzes the reverse reaction allowing the synthesis of ceramides from fatty acids and sphingosine. Together with sphingomyelinase, participates in the production of sphingosine and sphingosine-1-phosphate from the degradation of sphingomyelin, a sphingolipid enriched in the plasma membrane of cells. Also participates in the hydrolysis of ceramides from the extracellular milieu allowing the production of sphingosine-1-phosphate inside and outside cells. The chain is Neutral ceramidase (asah2) from Danio rerio (Zebrafish).